Reading from the N-terminus, the 126-residue chain is Protein ApaG (126 aa).

In terms of domain architecture, ApaG spans 2 to 126 (SDPRYQIDVS…FRLAVPGALH (125 aa)).

The polypeptide is Protein ApaG (Azotobacter vinelandii (strain DJ / ATCC BAA-1303)).